The following is a 429-amino-acid chain: Enolase (429 aa).

Gln168 contacts (2R)-2-phosphoglycerate. Glu210 serves as the catalytic Proton donor. Mg(2+)-binding residues include Asp247, Glu288, and Asp315. The (2R)-2-phosphoglycerate site is built by Lys340, Arg369, Ser370, and Lys391. The active-site Proton acceptor is the Lys340.

This sequence belongs to the enolase family. Mg(2+) serves as cofactor.

The protein resides in the cytoplasm. It localises to the secreted. The protein localises to the cell surface. The enzyme catalyses (2R)-2-phosphoglycerate = phosphoenolpyruvate + H2O. Its pathway is carbohydrate degradation; glycolysis; pyruvate from D-glyceraldehyde 3-phosphate: step 4/5. In terms of biological role, catalyzes the reversible conversion of 2-phosphoglycerate (2-PG) into phosphoenolpyruvate (PEP). It is essential for the degradation of carbohydrates via glycolysis. This chain is Enolase, found in Nostoc sp. (strain PCC 7120 / SAG 25.82 / UTEX 2576).